Reading from the N-terminus, the 993-residue chain is Testis-expressed protein 13C (993 aa).

Disordered stretches follow at residues 281–381 (QEET…SLKK), 520–547 (DSKS…SHSL), and 894–959 (FSKS…PVNW). Over residues 325–335 (GMTSQGDSSSH) the composition is skewed to polar residues. Basic and acidic residues predominate over residues 353 to 364 (SRSHSLEKKPVM). Residues 944–957 (ESQQQKPASCSSPV) are compositionally biased toward polar residues. Residues 955–984 (SPVNWACPWCNAMNFPRNKVCSKCKRVRMP) form a RanBP2-type zinc finger.

Belongs to the TEX13 family.

This Homo sapiens (Human) protein is Testis-expressed protein 13C.